A 343-amino-acid chain; its full sequence is Dihydroorotase (343 aa).

Residues H14 and H16 each coordinate Zn(2+). Substrate is bound by residues 16–18 and N42; that span reads HVR. K99, H136, and H174 together coordinate Zn(2+). K99 is modified (N6-carboxylysine). Residue H136 coordinates substrate. L219 lines the substrate pocket. D247 is a Zn(2+) binding site. D247 is a catalytic residue. Positions 251 and 263 each coordinate substrate.

The protein belongs to the metallo-dependent hydrolases superfamily. DHOase family. Class II DHOase subfamily. Homodimer. Zn(2+) is required as a cofactor.

It catalyses the reaction (S)-dihydroorotate + H2O = N-carbamoyl-L-aspartate + H(+). The protein operates within pyrimidine metabolism; UMP biosynthesis via de novo pathway; (S)-dihydroorotate from bicarbonate: step 3/3. Catalyzes the reversible cyclization of carbamoyl aspartate to dihydroorotate. This Variovorax paradoxus (strain S110) protein is Dihydroorotase.